The chain runs to 385 residues: Lysine 6-dehydrogenase (385 aa).

Belongs to the saccharopine dehydrogenase family. Homohexamer.

The catalysed reaction is L-lysine + NAD(+) = L-1-piperideine-6-carboxylate + NH4(+) + NADH + 2 H(+). Catalyzes the oxidative deamination of L-lysine in the presence of NAD. Can also use (S)-(2-aminoethyl)-L-cysteine as a substrate, but more slowly. Can use both NAD and NADP but the preferred substrate is NAD. The sequence is that of Lysine 6-dehydrogenase (lysDH) from Geobacillus stearothermophilus (Bacillus stearothermophilus).